The following is a 234-amino-acid chain: Protein CIST1 (234 aa).

Residues 1–24 (MACPQLPPLLLLVLVVLLKAGVNY) form the signal peptide. The Extracellular portion of the chain corresponds to 25 to 180 (NTPFTDIVTS…GPRELHRNPS (156 aa)). The span at 41-121 (SPVSSLISSP…THPSSGSPSA (81 aa)) shows a compositional bias: polar residues. Residues 41 to 174 (SPVSSLISSP…PAPGDTGPRE (134 aa)) form a disordered region. Residues 122 to 140 (ELTPSSHSTLPSSESLTPH) show a composition bias toward low complexity. Residues 141-159 (WSPTSHSPGTEPLTSTDQT) show a composition bias toward polar residues. Residues 181–201 (VVVVVCLLVSLLLIGSVVMAV) form a helical membrane-spanning segment. The Cytoplasmic portion of the chain corresponds to 202–234 (RFCHRNESKFENLDEVSMGSVNDRLSFAHHLQE).

It is found in the membrane. This Homo sapiens (Human) protein is Protein CIST1.